Consider the following 154-residue polypeptide: Myoglobin (154 aa).

A Globin domain is found at Val-2–Lys-148. Position 4 is a phosphoserine (Ser-4). His-65 is a binding site for nitrite. Position 65 (His-65) interacts with O2. Thr-68 is subject to Phosphothreonine. His-94 lines the heme b pocket.

It belongs to the globin family. In terms of assembly, monomeric.

Its subcellular location is the cytoplasm. The protein resides in the sarcoplasm. The catalysed reaction is Fe(III)-heme b-[protein] + nitric oxide + H2O = Fe(II)-heme b-[protein] + nitrite + 2 H(+). It catalyses the reaction H2O2 + AH2 = A + 2 H2O. In terms of biological role, monomeric heme protein which primary function is to store oxygen and facilitate its diffusion within muscle tissues. Reversibly binds oxygen through a pentacoordinated heme iron and enables its timely and efficient release as needed during periods of heightened demand. Depending on the oxidative conditions of tissues and cells, and in addition to its ability to bind oxygen, it also has a nitrite reductase activity whereby it regulates the production of bioactive nitric oxide. Under stress conditions, like hypoxia and anoxia, it also protects cells against reactive oxygen species thanks to its pseudoperoxidase activity. The sequence is that of Myoglobin (MB) from Eschrichtius robustus (California gray whale).